The sequence spans 836 residues: Phenylalanine--tRNA ligase beta subunit (836 aa).

A tRNA-binding domain is found at Pro-44 to Arg-160. A B5 domain is found at Pro-420–Thr-495. Residues Asp-473, Asp-479, Glu-482, and Glu-483 each contribute to the Mg(2+) site. The FDX-ACB domain occupies Ser-742 to Arg-835.

Belongs to the phenylalanyl-tRNA synthetase beta subunit family. Type 1 subfamily. Tetramer of two alpha and two beta subunits. Requires Mg(2+) as cofactor.

It is found in the cytoplasm. The enzyme catalyses tRNA(Phe) + L-phenylalanine + ATP = L-phenylalanyl-tRNA(Phe) + AMP + diphosphate + H(+). The chain is Phenylalanine--tRNA ligase beta subunit from Corynebacterium diphtheriae (strain ATCC 700971 / NCTC 13129 / Biotype gravis).